A 1116-amino-acid chain; its full sequence is Pleckstrin homology domain-containing family A member 5 (1116 aa).

Ala2 is subject to N-acetylalanine. Residues 10–43 (ISLPRSWTYGITRGGRVFFINEEAKSTTWLHPVT) enclose the WW 1 domain. A Phosphoserine modification is found at Ser55. One can recognise a WW 2 domain in the interval 56–89 (TDLPTGWEEAYTFEGARYYINHNERKVTCKHPVT). The segment at 140 to 163 (SPVGRTSRASKKVHNFGKRSNSIK) is disordered. Residues 147–156 (RASKKVHNFG) are compositionally biased toward basic residues. Residues 169–268 (PVVRRGWLYK…WMKAMLDAAL (100 aa)) enclose the PH domain. Residue Lys301 forms a Glycyl lysine isopeptide (Lys-Gly) (interchain with G-Cter in SUMO2) linkage. Phosphoserine occurs at positions 382 and 410. 2 positions are modified to phosphothreonine: Thr438 and Thr460. The segment at 459–495 (RTLPRNSKTRPESICSVTPSTHDKTLGPGAEEKRRSM) is disordered. The span at 479–495 (THDKTLGPGAEEKRRSM) shows a compositional bias: basic and acidic residues. Residues Ser568, Ser607, Ser809, Ser855, Ser933, and Ser937 each carry the phosphoserine modification. 2 disordered regions span residues 928–978 (GASD…PATE) and 1025–1116 (RNKD…FMCV). Positions 930 to 949 (SDQSPLQSPSNLRDNPFRTT) are enriched in polar residues. The segment covering 952 to 978 (RRRDDKELDTAIRENDVKPDHETPATE) has biased composition (basic and acidic residues). Residues 1036–1046 (FSPQDETQTAN) are compositionally biased toward polar residues. A compositionally biased stretch (basic and acidic residues) spans 1047–1061 (HKPEEHPEENTKNSV). A compositionally biased stretch (polar residues) spans 1070 to 1085 (SYESTPEVSRGNQTMA). The segment covering 1088–1101 (SLSPSPESSASPVP) has biased composition (low complexity).

Highly expressed in heart and kidney.

Its subcellular location is the cytoplasm. This is Pleckstrin homology domain-containing family A member 5 (PLEKHA5) from Homo sapiens (Human).